A 932-amino-acid chain; its full sequence is Valine--tRNA ligase (932 aa).

Positions 75–85 match the 'HIGH' region motif; it reads PNVTGQLHMGH. Residues 568 to 572 carry the 'KMSKS' region motif; that stretch reads KMSKS. Residue Lys-571 participates in ATP binding. Residues 863-929 adopt a coiled-coil conformation; the sequence is TVDVAAERKR…ERITARLEGL (67 aa).

Belongs to the class-I aminoacyl-tRNA synthetase family. ValS type 1 subfamily. Monomer.

It localises to the cytoplasm. The enzyme catalyses tRNA(Val) + L-valine + ATP = L-valyl-tRNA(Val) + AMP + diphosphate. In terms of biological role, catalyzes the attachment of valine to tRNA(Val). As ValRS can inadvertently accommodate and process structurally similar amino acids such as threonine, to avoid such errors, it has a 'posttransfer' editing activity that hydrolyzes mischarged Thr-tRNA(Val) in a tRNA-dependent manner. This Corynebacterium jeikeium (strain K411) protein is Valine--tRNA ligase.